We begin with the raw amino-acid sequence, 462 residues long: Glycoprotein endo-alpha-1,2-mannosidase (462 aa).

Over 1-8 the chain is Cytoplasmic; sequence MAKFRRRT. The chain crosses the membrane as a helical; Signal-anchor for type II membrane protein span at residues 9-29; the sequence is CIILALFILFIFSLMMGLKML. Residues 30–462 are Lumenal-facing; that stretch reads RPNTATFGAP…YALDRQLPVS (433 aa). The tract at residues 60 to 462 is catalytic; the sequence is DFQKSDRINS…YALDRQLPVS (403 aa).

The protein belongs to the glycosyl hydrolase 99 family. In terms of processing, undergoes proteolytic cleavage in the C-terminal region. In terms of tissue distribution, highly expressed in the liver and kidney. Expressed at lower levels in muscle, pancreas, heart, placenta, lung and brain.

Its subcellular location is the golgi apparatus membrane. It carries out the reaction N-{alpha-Glc-(1-&gt;3)-alpha-Man-(1-&gt;2)-alpha-Man-(1-&gt;2)-alpha-Man-(1-&gt;3)-[alpha-Man-(1-&gt;2)-alpha-Man-(1-&gt;3)-[alpha-Man-(1-&gt;2)-alpha-Man-(1-&gt;6)]-alpha-Man-(1-&gt;6)]-beta-Man-(1-&gt;4)-beta-GlcNAc-(1-&gt;4)-beta-GlcNAc}-L-asparaginyl-[protein] + H2O = alpha-D-glucosyl-(1-&gt;3)-D-mannopyranose + N(4)-{alpha-D-Man-(1-&gt;2)-alpha-D-Man-(1-&gt;3)-[alpha-D-Man-(1-&gt;2)-alpha-D-Man-(1-&gt;3)-[alpha-D-Man-(1-&gt;2)-alpha-D-Man-(1-&gt;6)]-alpha-D-Man-(1-&gt;6)]-beta-D-Man-(1-&gt;4)-beta-D-GlaNAc-(1-&gt;4)-beta-D-GlcNAc}-L-asparaginyl-[protein] (N-glucan mannose isomer 8A1,2,3B1,2). This Homo sapiens (Human) protein is Glycoprotein endo-alpha-1,2-mannosidase (MANEA).